Reading from the N-terminus, the 210-residue chain is Proteasome subunit beta (210 aa).

The propeptide at 1-9 (MDNDKYLKG) is removed in mature form; by autocatalysis. Residue threonine 10 is the Nucleophile of the active site.

Belongs to the peptidase T1B family. In terms of assembly, the 20S proteasome core is composed of 14 alpha and 14 beta subunits that assemble into four stacked heptameric rings, resulting in a barrel-shaped structure. The two inner rings, each composed of seven catalytic beta subunits, are sandwiched by two outer rings, each composed of seven alpha subunits. The catalytic chamber with the active sites is on the inside of the barrel. Has a gated structure, the ends of the cylinder being occluded by the N-termini of the alpha-subunits. Is capped at one or both ends by the proteasome regulatory ATPase, PAN.

Its subcellular location is the cytoplasm. The catalysed reaction is Cleavage of peptide bonds with very broad specificity.. With respect to regulation, the formation of the proteasomal ATPase PAN-20S proteasome complex, via the docking of the C-termini of PAN into the intersubunit pockets in the alpha-rings, triggers opening of the gate for substrate entry. Interconversion between the open-gate and close-gate conformations leads to a dynamic regulation of the 20S proteasome proteolysis activity. Component of the proteasome core, a large protease complex with broad specificity involved in protein degradation. This Methanosarcina thermophila protein is Proteasome subunit beta.